Consider the following 352-residue polypeptide: Ion-translocating oxidoreductase complex subunit D (352 aa).

The next 4 helical transmembrane spans lie at 20-40 (IMLL…WFFG), 42-62 (GTLV…ALVL), 89-109 (IPPL…VIIA), and 123-143 (PAMI…TSWL). Threonine 187 carries the FMN phosphoryl threonine modification. The next 5 helical transmembrane spans lie at 214-234 (ILAG…GVWL), 242-262 (WHIP…GWLF), 267-287 (LAAP…FFIL), 301-321 (LIFG…GGYP), and 322-342 (DGVA…DYYT).

This sequence belongs to the NqrB/RnfD family. In terms of assembly, the complex is composed of six subunits: RsxA, RsxB, RsxC, RsxD, RsxE and RsxG. Requires FMN as cofactor.

The protein localises to the cell inner membrane. Its function is as follows. Part of a membrane-bound complex that couples electron transfer with translocation of ions across the membrane. Required to maintain the reduced state of SoxR. This is Ion-translocating oxidoreductase complex subunit D from Escherichia coli O127:H6 (strain E2348/69 / EPEC).